A 274-amino-acid polypeptide reads, in one-letter code: Urease accessory protein UreD 2 (274 aa).

Belongs to the UreD family. UreD, UreF and UreG form a complex that acts as a GTP-hydrolysis-dependent molecular chaperone, activating the urease apoprotein by helping to assemble the nickel containing metallocenter of UreC. The UreE protein probably delivers the nickel.

The protein resides in the cytoplasm. Its function is as follows. Required for maturation of urease via the functional incorporation of the urease nickel metallocenter. This chain is Urease accessory protein UreD 2, found in Brucella anthropi (strain ATCC 49188 / DSM 6882 / CCUG 24695 / JCM 21032 / LMG 3331 / NBRC 15819 / NCTC 12168 / Alc 37) (Ochrobactrum anthropi).